The following is a 465-amino-acid chain: L-seryl-tRNA(Sec) selenium transferase (465 aa).

The residue at position 294 (Lys-294) is an N6-(pyridoxal phosphate)lysine.

This sequence belongs to the SelA family. Pyridoxal 5'-phosphate serves as cofactor.

It localises to the cytoplasm. The enzyme catalyses L-seryl-tRNA(Sec) + selenophosphate + H(+) = L-selenocysteinyl-tRNA(Sec) + phosphate. It participates in aminoacyl-tRNA biosynthesis; selenocysteinyl-tRNA(Sec) biosynthesis; selenocysteinyl-tRNA(Sec) from L-seryl-tRNA(Sec) (bacterial route): step 1/1. Functionally, converts seryl-tRNA(Sec) to selenocysteinyl-tRNA(Sec) required for selenoprotein biosynthesis. The sequence is that of L-seryl-tRNA(Sec) selenium transferase from Mannheimia succiniciproducens (strain KCTC 0769BP / MBEL55E).